We begin with the raw amino-acid sequence, 228 residues long: Ribosomal RNA small subunit methyltransferase G (228 aa).

S-adenosyl-L-methionine contacts are provided by residues glycine 70, 121 to 122 (AE), and arginine 138.

The protein belongs to the methyltransferase superfamily. RNA methyltransferase RsmG family.

Its subcellular location is the cytoplasm. Functionally, specifically methylates the N7 position of a guanine in 16S rRNA. The sequence is that of Ribosomal RNA small subunit methyltransferase G from Thermotoga petrophila (strain ATCC BAA-488 / DSM 13995 / JCM 10881 / RKU-1).